We begin with the raw amino-acid sequence, 716 residues long: MRWLPQISFSSPSSSPSSSLKPVASYSESPDPDRNQDRDRFHRRLFRFNRGRLTRQRKLRHLTDDDVLLGERRASTSSSTFDSGLTRSPSAFTAVPRSPSAVPLPLPLPLPEVAGIRNAANARGLDDRDRDPERLISDRTSSGPPLTSVNGGFARDSRKATENSSYQDFSPRNRNGYWVNIPTMSAPTSPYMSPVPSPQRKSTGHDLPFFYLPPKSNQAWSAPDMPLDTSGLPPPAFYDITAFSTDNSPIHSPQPRSPRKQIRSPQPSRPSSPLHSVDSSAPPRDSVSSPLHPRLSTDVTNGRRDCCNVHPLPLPPGATCSSSSAASVPSPQAPLKLDSFPMNSQWKKGKLIGRGTFGSVYVASNSETGALCAMKEVELFPDDPKSAECIKQLEQEIKLLSNLQHPNIVQYFGSETVEDRFFIYLEYVHPGSINKYIRDHCGTMTESVVRNFTRHILSGLAYLHNKKTVHRDIKGANLLVDASGVVKLADFGMAKHLTGQRADLSLKGSPYWMAPELMQAVMQKDSNPDLAFAVDIWSLGCTIIEMFTGKPPWSEFEGAAAMFKVMRDSPPIPESMSPEGKDFLRLCFQRNPAERPTASMLLEHRFLKNSLQPTSPSNSDVSQLFNGMNITEPSSRREKPNFKLDQVPRARNMTSSESESGQQQQQQQYRSPDLTGTVNRLSPRSTLEAIPSPCPSQRPKPSSSDRRRTGVTSDHL.

A compositionally biased stretch (low complexity) spans 1–27 (MRWLPQISFSSPSSSPSSSLKPVASYS). Disordered stretches follow at residues 1–42 (MRWL…DRFH), 74–98 (ASTSSSTFDSGLTRSPSAFTAVPRS), 119–180 (AANA…YWVN), and 238–302 (YDIT…VTNG). Over residues 31–40 (DPDRNQDRDR) the composition is skewed to basic and acidic residues. The span at 75–91 (STSSSTFDSGLTRSPSA) shows a compositional bias: polar residues. A compositionally biased stretch (basic and acidic residues) spans 124-137 (GLDDRDRDPERLIS). 3 stretches are compositionally biased toward polar residues: residues 138-150 (DRTSSGPPLTSVN), 162-173 (ENSSYQDFSPRN), and 242-251 (AFSTDNSPIH). Low complexity predominate over residues 263–273 (RSPQPSRPSSP). The 262-residue stretch at 346–607 (WKKGKLIGRG…ASMLLEHRFL (262 aa)) folds into the Protein kinase domain. Residues 352 to 360 (IGRGTFGSV) and K375 contribute to the ATP site. D472 serves as the catalytic Proton acceptor. A compositionally biased stretch (polar residues) spans 610 to 633 (SLQPTSPSNSDVSQLFNGMNITEP). The disordered stretch occupies residues 610–716 (SLQPTSPSNS…RRTGVTSDHL (107 aa)). S617 and S622 each carry phosphoserine; by PBL27. Positions 634 to 648 (SSRREKPNFKLDQVP) are enriched in basic and acidic residues. Composition is skewed to polar residues over residues 652 to 661 (NMTSSESESG) and 674 to 685 (LTGTVNRLSPRS). 2 positions are modified to phosphoserine; by PBL27: S658 and S660. Phosphothreonine; by PBL27 is present on T677. A Phosphoserine; by PBL27 modification is found at S685. A compositionally biased stretch (basic and acidic residues) spans 703–716 (SSDRRRTGVTSDHL).

The protein belongs to the protein kinase superfamily. STE Ser/Thr protein kinase family. MAP kinase kinase kinase subfamily. In terms of assembly, interacts with PBL27 at the plasma membrane; disassociation is induced by chitin perception by the CERK1 complex. Interacts with MKK2, MKK4, and MKK5 mainly in the cytosol. Phosphorylated by PBL27 during chitin-mediated signaling in a CERK1-dependent manner. In terms of tissue distribution, mostly expressed in flower buds. Also present in pollen, roots, leaves and seedlings, and, at low levels, in stems and immature siliques.

The protein resides in the cell membrane. The protein localises to the cytoplasm. Its subcellular location is the cytosol. The enzyme catalyses L-seryl-[protein] + ATP = O-phospho-L-seryl-[protein] + ADP + H(+). The catalysed reaction is L-threonyl-[protein] + ATP = O-phospho-L-threonyl-[protein] + ADP + H(+). In terms of biological role, mitogen-activated protein kinase (MAPK) involved in the transduction of signal between the host cell surface chitin receptor complex CERK1-LYK5 and the intracellular MAPK cascade that leads to chitin-induced immunity. Phosphorylates and activates MAPK targets (e.g. MKK4, MKK5, and possibly MKK2) when phosphorylated by PBL27 after elicitation by chitin. Required for resistance to the fungus A.brassicicola. The protein is Mitogen-activated protein kinase kinase kinase 5 of Arabidopsis thaliana (Mouse-ear cress).